Here is a 329-residue protein sequence, read N- to C-terminus: NADH-quinone oxidoreductase subunit H (329 aa).

9 consecutive transmembrane segments (helical) span residues Leu-9–Ile-29, Gly-42–Phe-62, Phe-75–Ile-95, Ile-117–Gly-137, Ile-154–Val-174, Gly-188–Ala-208, Leu-238–Ile-258, Trp-269–Trp-291, and Trp-309–Ile-329.

Belongs to the complex I subunit 1 family. As to quaternary structure, NDH-1 is composed of 14 different subunits. Subunits NuoA, H, J, K, L, M, N constitute the membrane sector of the complex.

It localises to the cell inner membrane. It carries out the reaction a quinone + NADH + 5 H(+)(in) = a quinol + NAD(+) + 4 H(+)(out). NDH-1 shuttles electrons from NADH, via FMN and iron-sulfur (Fe-S) centers, to quinones in the respiratory chain. The immediate electron acceptor for the enzyme in this species is believed to be ubiquinone. Couples the redox reaction to proton translocation (for every two electrons transferred, four hydrogen ions are translocated across the cytoplasmic membrane), and thus conserves the redox energy in a proton gradient. This subunit may bind ubiquinone. The chain is NADH-quinone oxidoreductase subunit H from Helicobacter pylori (strain Shi470).